A 419-amino-acid chain; its full sequence is tRNA(Ile)-lysidine synthase (419 aa).

ATP is bound at residue 25–30 (SGGIDS).

It belongs to the tRNA(Ile)-lysidine synthase family.

The protein localises to the cytoplasm. It catalyses the reaction cytidine(34) in tRNA(Ile2) + L-lysine + ATP = lysidine(34) in tRNA(Ile2) + AMP + diphosphate + H(+). Ligates lysine onto the cytidine present at position 34 of the AUA codon-specific tRNA(Ile) that contains the anticodon CAU, in an ATP-dependent manner. Cytidine is converted to lysidine, thus changing the amino acid specificity of the tRNA from methionine to isoleucine. This chain is tRNA(Ile)-lysidine synthase, found in Actinobacillus pleuropneumoniae serotype 7 (strain AP76).